We begin with the raw amino-acid sequence, 348 residues long: Holliday junction branch migration complex subunit RuvB (348 aa).

Positions 1 to 183 (MAPQPRRLIA…FGIPIRLEYY (183 aa)) are large ATPase domain (RuvB-L). ATP contacts are provided by residues Leu-22, Arg-23, Gly-64, Lys-67, Thr-68, Thr-69, 130–132 (EDF), Arg-173, Tyr-183, and Arg-220. Position 68 (Thr-68) interacts with Mg(2+). A small ATPAse domain (RuvB-S) region spans residues 184-254 (TVEELECIVR…VADRALRLLD (71 aa)). The tract at residues 257-348 (HIGLDQMDRR…FQLFSEGGEE (92 aa)) is head domain (RuvB-H). Positions 293, 312, and 317 each coordinate DNA.

The protein belongs to the RuvB family. Homohexamer. Forms an RuvA(8)-RuvB(12)-Holliday junction (HJ) complex. HJ DNA is sandwiched between 2 RuvA tetramers; dsDNA enters through RuvA and exits via RuvB. An RuvB hexamer assembles on each DNA strand where it exits the tetramer. Each RuvB hexamer is contacted by two RuvA subunits (via domain III) on 2 adjacent RuvB subunits; this complex drives branch migration. In the full resolvosome a probable DNA-RuvA(4)-RuvB(12)-RuvC(2) complex forms which resolves the HJ.

Its subcellular location is the cytoplasm. It carries out the reaction ATP + H2O = ADP + phosphate + H(+). Its function is as follows. The RuvA-RuvB-RuvC complex processes Holliday junction (HJ) DNA during genetic recombination and DNA repair, while the RuvA-RuvB complex plays an important role in the rescue of blocked DNA replication forks via replication fork reversal (RFR). RuvA specifically binds to HJ cruciform DNA, conferring on it an open structure. The RuvB hexamer acts as an ATP-dependent pump, pulling dsDNA into and through the RuvAB complex. RuvB forms 2 homohexamers on either side of HJ DNA bound by 1 or 2 RuvA tetramers; 4 subunits per hexamer contact DNA at a time. Coordinated motions by a converter formed by DNA-disengaged RuvB subunits stimulates ATP hydrolysis and nucleotide exchange. Immobilization of the converter enables RuvB to convert the ATP-contained energy into a lever motion, pulling 2 nucleotides of DNA out of the RuvA tetramer per ATP hydrolyzed, thus driving DNA branch migration. The RuvB motors rotate together with the DNA substrate, which together with the progressing nucleotide cycle form the mechanistic basis for DNA recombination by continuous HJ branch migration. Branch migration allows RuvC to scan DNA until it finds its consensus sequence, where it cleaves and resolves cruciform DNA. This is Holliday junction branch migration complex subunit RuvB from Methylocella silvestris (strain DSM 15510 / CIP 108128 / LMG 27833 / NCIMB 13906 / BL2).